The primary structure comprises 227 residues: MGGTASTRRVTFEADENENITVVKGIRLSENVIDRMKETSPSGPKSQRYSGTYGASVSDEELKRRVAEELALEQAKKESENQKRLKQSKELDAEKAFANEQLTRAILRERISNEEERAKAKHLAKQLEEKDRVIKKQDAFYKEQLARLEERSSEFYKVTTEQYQKAAEEVEAKFKRYEYHPVCADLQAQILQCYRQNTQQTLSCSALASQYMRCVNQAKQSTLEKGG.

G2 is lipidated: N-myristoyl glycine. S29 is modified (phosphoserine). Residues 34–60 (DRMKETSPSGPKSQRYSGTYGASVSDE) form a disordered region. Positions 39 to 55 (TSPSGPKSQRYSGTYGA) are enriched in polar residues. Y49 is modified (phosphotyrosine). A phosphoserine mark is found at S50, S56, and S58. Position 142 is an N6-acetyllysine (K142). Residues 180-222 (HPVCADLQAQILQCYRQNTQQTLSCSALASQYMRCVNQAKQST) form the CHCH domain. Short sequence motifs (cx9C motif) lie at residues 183–193 (CADLQAQILQC) and 204–214 (CSALASQYMRC). 2 disulfides stabilise this stretch: C183-C214 and C193-C204.

This sequence belongs to the MICOS complex subunit Mic19 family. Metazoan Mic19 subfamily. In terms of assembly, component of the mitochondrial contact site and cristae organizing system (MICOS) complex, composed of at least MICOS10/MIC10, CHCHD3/MIC19, CHCHD6/MIC25, APOOL/MIC27, IMMT/MIC60, APOO/MIC23/MIC26 and MICOS13/MIC13. This complex was also known under the names MINOS or MitOS complex. The MICOS complex associates with mitochondrial outer membrane proteins SAMM50, MTX1 and MTX2 (together described as components of the mitochondrial outer membrane sorting assembly machinery (SAM) complex) and DNAJC11, mitochondrial inner membrane protein TMEM11 and with HSPA9. The MICOS and SAM complexes together with DNAJC11 are part of a large protein complex spanning both membranes termed the mitochondrial intermembrane space bridging (MIB) complex. Interacts with HSPA1A/HSPA1B and OPA1, preferentially with the soluble OPA1 form. Interacts with IMMT/MIC60.

It localises to the mitochondrion inner membrane. The protein resides in the cytoplasm. Its subcellular location is the nucleus. The protein localises to the mitochondrion. Its function is as follows. Component of the MICOS complex, a large protein complex of the mitochondrial inner membrane that plays crucial roles in the maintenance of crista junctions, inner membrane architecture, and formation of contact sites to the outer membrane. Has also been shown to function as a transcription factor which binds to the BAG1 promoter and represses BAG1 transcription. Plays an important role in the maintenance of the MICOS complex stability and the mitochondrial cristae morphology. The sequence is that of MICOS complex subunit MIC19 (CHCHD3) from Bos taurus (Bovine).